Consider the following 468-residue polypeptide: Phosphomethylpyrimidine synthase (468 aa).

Substrate is bound by residues Asn80, Met109, Tyr138, His173, 193 to 195 (SRG), 234 to 237 (DGLR), and Glu273. His277 contributes to the Zn(2+) binding site. Tyr300 is a substrate binding site. A Zn(2+)-binding site is contributed by His341. [4Fe-4S] cluster contacts are provided by Cys421, Cys424, and Cys429.

It belongs to the ThiC family. Homodimer. Requires [4Fe-4S] cluster as cofactor.

It carries out the reaction 5-amino-1-(5-phospho-beta-D-ribosyl)imidazole + S-adenosyl-L-methionine = 4-amino-2-methyl-5-(phosphooxymethyl)pyrimidine + CO + 5'-deoxyadenosine + formate + L-methionine + 3 H(+). Its pathway is cofactor biosynthesis; thiamine diphosphate biosynthesis. In terms of biological role, catalyzes the synthesis of the hydroxymethylpyrimidine phosphate (HMP-P) moiety of thiamine from aminoimidazole ribotide (AIR) in a radical S-adenosyl-L-methionine (SAM)-dependent reaction. The sequence is that of Phosphomethylpyrimidine synthase from Anaeromyxobacter sp. (strain Fw109-5).